Reading from the N-terminus, the 219-residue chain is Uracil-DNA glycosylase (219 aa).

The active-site Proton acceptor is the Asp-59.

Belongs to the uracil-DNA glycosylase (UDG) superfamily. UNG family.

It is found in the cytoplasm. The enzyme catalyses Hydrolyzes single-stranded DNA or mismatched double-stranded DNA and polynucleotides, releasing free uracil.. Its function is as follows. Excises uracil residues from the DNA which can arise as a result of misincorporation of dUMP residues by DNA polymerase or due to deamination of cytosine. The protein is Uracil-DNA glycosylase of Staphylococcus haemolyticus (strain JCSC1435).